The chain runs to 92 residues: uncharacterized protein (92 aa).

It to M.jannaschii MJ0782.1.

This is an uncharacterized protein from Methanothermobacter thermautotrophicus (strain ATCC 29096 / DSM 1053 / JCM 10044 / NBRC 100330 / Delta H) (Methanobacterium thermoautotrophicum).